The following is an 827-amino-acid chain: MASSEAEWVTIANNLLFKCHIHLRIHELQDCDANVFIALYQSILGEKVPDLIVLPRNQEDEAHNVQAVIDSLALDYLQVSLSHITGENIVKGDNESIRNLLEIFDGLLDYLTEHISESSPNKSETEQYSKDSHGEEAGEDLERTEEAKWRNASFMRCSFSSDTLGPTWDEDEAESTGEIIRLGDTAHTFSQRSNGAQNSKDLRSRKASASPGVEPPEEMLNPGPLGFLSQNGPPCEAASETPPMSMVPSARKLGEPIRAAIPLHPPYHPSEPRAPCPIGKEYLWSSRYLSTPTSGEHMAPSVEPDDAFLTSTLFKDDDQETYLPKPEATRTRKPSKGERDENRAAIPSEHLPFSQKARKPLTEQELHAMSEKLSQRLSELDWMLKTALGDRGTGETDGNDGDGGGEEVRSGNEEMLSQHSDSVMEYGPKKPRPGFSTCRKAPYRSHSLSPSSVNKHRQLEKEKKRQHKSKGTDSCHFQAKALTEAFERELRKHKVQENVGLRGIREEEEEEEETGKSYREVVPKGTSKRSQVQKTYSRKTAAPSPKGDGRLKSSKASPMKVSEHSLLSLMLEQFPFLYVSDPTLTKMWKQQMAQVEQLKREAQRENRSKKKLQDEIEEALRRHDLLTALVKKEYDHNKRLQDFRDRIQRQRLTQSKIKENRHQSVRARKYYDDYRVQLRAKMMKMRTREEMIFKKLFEEGLQIQKQRLRDLRNYAKEKRNEEKRQHQNELDSMENHYKDQFSLLAEAISQERQELKVRQKFQAQTLHKVKRELRAKMEKEIQQLQHMITQNDDDAFFRELEAERFKARLQLASFQYSKNPFPRGQTS.

Disordered regions lie at residues 115 to 145 (ISESSPNKSETEQYSKDSHGEEAGEDLERTE), 183 to 249 (GDTA…MVPS), 308 to 372 (FLTS…MSEK), 388 to 476 (LGDR…DSCH), and 489 to 558 (ELRK…KASP). Residues 123 to 145 (SETEQYSKDSHGEEAGEDLERTE) show a composition bias toward basic and acidic residues. Residues 187–199 (HTFSQRSNGAQNS) show a composition bias toward polar residues. Composition is skewed to basic and acidic residues over residues 327 to 343 (EATRTRKPSKGERDENR) and 360 to 372 (PLTEQELHAMSEK). Phosphoserine is present on residues serine 447, serine 449, and serine 451. 2 coiled-coil regions span residues 584 to 633 (LTKM…VKKE) and 701 to 795 (LQIQ…DDDA).

It is found in the cytoplasm. The protein resides in the cytoskeleton. Its subcellular location is the microtubule organizing center. The protein localises to the centrosome. It localises to the spindle pole. This chain is Centrosomal protein of 95 kDa (Cep95), found in Mus musculus (Mouse).